We begin with the raw amino-acid sequence, 167 residues long: Transmembrane protein 229B (167 aa).

The Cytoplasmic portion of the chain corresponds to 1–14 (MASAEPLTALSRWY). The helical transmembrane segment at 15–35 (LYAIHGYFCEVMFTAAWEFVV) threads the bilayer. Topologically, residues 36 to 40 (NFNWK) are extracellular. The helical transmembrane segment at 41-61 (FPGVTSVWALFIYGTSILIVE) threads the bilayer. The Cytoplasmic portion of the chain corresponds to 62-73 (RMYLRLRGRCPL). Residues 74–94 (LVRCVIYTLWTYLWEFTTGFI) form a helical membrane-spanning segment. The Extracellular segment spans residues 95-109 (LRQFNACPWDYSQFD). The chain crosses the membrane as a helical span at residues 110–130 (FDFMGLITLEYAVPWFCGALI). Residues 131–167 (MEQFIIRNTLRLRFDKDAEPGEPASPPALANGHVKTD) lie on the Cytoplasmic side of the membrane. The tract at residues 148 to 167 (AEPGEPASPPALANGHVKTD) is disordered.

This sequence belongs to the TMEM229 family.

It localises to the membrane. This is Transmembrane protein 229B (TMEM229B) from Mus musculus (Mouse).